The primary structure comprises 363 residues: UDP-N-acetylglucosamine--N-acetylmuramyl-(pentapeptide) pyrophosphoryl-undecaprenol N-acetylglucosamine transferase (363 aa).

UDP-N-acetyl-alpha-D-glucosamine is bound by residues 14–16 (TGG), R171, S200, and Q290.

This sequence belongs to the glycosyltransferase 28 family. MurG subfamily.

Its subcellular location is the cell inner membrane. The enzyme catalyses di-trans,octa-cis-undecaprenyl diphospho-N-acetyl-alpha-D-muramoyl-L-alanyl-D-glutamyl-meso-2,6-diaminopimeloyl-D-alanyl-D-alanine + UDP-N-acetyl-alpha-D-glucosamine = di-trans,octa-cis-undecaprenyl diphospho-[N-acetyl-alpha-D-glucosaminyl-(1-&gt;4)]-N-acetyl-alpha-D-muramoyl-L-alanyl-D-glutamyl-meso-2,6-diaminopimeloyl-D-alanyl-D-alanine + UDP + H(+). It participates in cell wall biogenesis; peptidoglycan biosynthesis. Functionally, cell wall formation. Catalyzes the transfer of a GlcNAc subunit on undecaprenyl-pyrophosphoryl-MurNAc-pentapeptide (lipid intermediate I) to form undecaprenyl-pyrophosphoryl-MurNAc-(pentapeptide)GlcNAc (lipid intermediate II). The polypeptide is UDP-N-acetylglucosamine--N-acetylmuramyl-(pentapeptide) pyrophosphoryl-undecaprenol N-acetylglucosamine transferase (Borreliella burgdorferi (strain ATCC 35210 / DSM 4680 / CIP 102532 / B31) (Borrelia burgdorferi)).